The following is an 87-amino-acid chain: Small ribosomal subunit protein bS20 (87 aa).

Belongs to the bacterial ribosomal protein bS20 family.

Functionally, binds directly to 16S ribosomal RNA. This chain is Small ribosomal subunit protein bS20, found in Clostridium perfringens (strain 13 / Type A).